The sequence spans 175 residues: MPRPAKGARLGGSAAHEKLLLANLAKSLFEHGRITTTEAKARRLRPVAERLVTKAKKGDIHNRRLVLQTITDKSVVHTLFTEIAPRYENRPGGYTRITKIGNRRGDNAPMAVIELVEALTVAQQATGEAEAATKRAVKEDALKKDEAPAAESVEDAKPAEDAPAAEAADDKGKDA.

The disordered stretch occupies residues 127–175 (GEAEAATKRAVKEDALKKDEAPAAESVEDAKPAEDAPAAEAADDKGKDA). A compositionally biased stretch (basic and acidic residues) spans 131–147 (AATKRAVKEDALKKDEA).

Belongs to the bacterial ribosomal protein bL17 family. As to quaternary structure, part of the 50S ribosomal subunit. Contacts protein L32.

This Streptomyces griseus subsp. griseus (strain JCM 4626 / CBS 651.72 / NBRC 13350 / KCC S-0626 / ISP 5235) protein is Large ribosomal subunit protein bL17.